The chain runs to 282 residues: Putative 4-diphosphocytidyl-2-C-methyl-D-erythritol kinase (282 aa).

Lysine 10 is an active-site residue. Position 94-104 (94-104 (PICAGLGGGSS)) interacts with ATP. The active site involves aspartate 136.

Belongs to the GHMP kinase family. IspE subfamily.

It carries out the reaction 4-CDP-2-C-methyl-D-erythritol + ATP = 4-CDP-2-C-methyl-D-erythritol 2-phosphate + ADP + H(+). Its function is as follows. Catalyzes the phosphorylation of the position 2 hydroxy group of 4-diphosphocytidyl-2C-methyl-D-erythritol. This is Putative 4-diphosphocytidyl-2-C-methyl-D-erythritol kinase (ipk) from Streptococcus mutans serotype c (strain ATCC 700610 / UA159).